We begin with the raw amino-acid sequence, 259 residues long: Ribonuclease PH (259 aa).

Phosphate is bound by residues Arg-88 and 126 to 128; that span reads GTR.

It belongs to the RNase PH family. In terms of assembly, homohexameric ring arranged as a trimer of dimers.

It catalyses the reaction tRNA(n+1) + phosphate = tRNA(n) + a ribonucleoside 5'-diphosphate. Its function is as follows. Phosphorolytic 3'-5' exoribonuclease that plays an important role in tRNA 3'-end maturation. Removes nucleotide residues following the 3'-CCA terminus of tRNAs; can also add nucleotides to the ends of RNA molecules by using nucleoside diphosphates as substrates, but this may not be physiologically important. Probably plays a role in initiation of 16S rRNA degradation (leading to ribosome degradation) during starvation. This Mycolicibacterium paratuberculosis (strain ATCC BAA-968 / K-10) (Mycobacterium paratuberculosis) protein is Ribonuclease PH.